Consider the following 258-residue polypeptide: UPF0246 protein YaaA (258 aa).

Belongs to the UPF0246 family.

The polypeptide is UPF0246 protein YaaA (Escherichia coli (strain K12 / MC4100 / BW2952)).